The primary structure comprises 87 residues: U3-theraphotoxin-Hhn1q (87 aa).

The first 24 residues, 1–24 (MVNMKASMFLTFAGLVLLFVVCYA), serve as a signal peptide directing secretion. The propeptide occupies 25-52 (SESEEKEFPKEMLSSIFAVDNDFKQEER). Disulfide bonds link Cys-54-Cys-67, Cys-61-Cys-72, and Cys-66-Cys-79.

The protein belongs to the neurotoxin 10 (Hwtx-1) family. 51 (Hntx-8) subfamily. Hntx-8 sub-subfamily. Expressed by the venom gland.

Its subcellular location is the secreted. Functionally, ion channel inhibitor. This is U3-theraphotoxin-Hhn1q from Cyriopagopus hainanus (Chinese bird spider).